The following is a 183-amino-acid chain: Ferritin heavy chain (183 aa).

Met1 is modified (N-acetylmethionine). Position 2 is an N-acetylthreonine; in Ferritin heavy chain, N-terminally processed (Thr2). Residues 11-160 (QNYHQDSEAA…DHVTNLRKMG (150 aa)) enclose the Ferritin-like diiron domain. 5 residues coordinate Fe cation: Glu28, Glu63, His66, Glu108, and Gln142. A phosphoserine mark is found at Ser179 and Ser183.

The protein belongs to the ferritin family. In terms of assembly, oligomer of 24 subunits. There are two types of subunits: L (light) chain and H (heavy) chain. The major chain can be light or heavy, depending on the species and tissue type. In the human liver, the heavy chain is predominant. The functional molecule forms a roughly spherical shell with a diameter of 12 nm and contains a central cavity into which the insoluble mineral iron core is deposited. Interacts with NCOA4; NCOA4 promotes targeting of the iron-binding ferritin complex to autolysosomes following starvation or iron depletion. Expressed in the liver.

The protein localises to the cytoplasm. It localises to the lysosome. Its subcellular location is the cytoplasmic vesicle. The protein resides in the autophagosome. It carries out the reaction 4 Fe(2+) + O2 + 4 H(+) = 4 Fe(3+) + 2 H2O. In terms of biological role, stores iron in a soluble, non-toxic, readily available form. Important for iron homeostasis. Has ferroxidase activity. Iron is taken up in the ferrous form and deposited as ferric hydroxides after oxidation. Also plays a role in delivery of iron to cells. Mediates iron uptake in capsule cells of the developing kidney. Delivery to lysosomes is mediated by the cargo receptor NCOA4 for autophagic degradation and release of iron. The protein is Ferritin heavy chain (FTH1) of Homo sapiens (Human).